The chain runs to 913 residues: Auxilin (913 aa).

Residue Met1 is modified to N-acetylmethionine. Tandem repeats lie at residues 36 to 39 (NLKD), 40 to 43 (NLKD), and 44 to 47 (TLKD). The 3 X 4 AA approximate tandem repeats stretch occupies residues 36-47 (NLKDNLKDTLKD). A Phosphatase tensin-type domain is found at 55–222 (SVTSYTKGDL…GYMCDLLADK (168 aa)). Ser112 carries the phosphoserine modification. The Phosphocysteine intermediate role is filled by Cys164. Residues 228–366 (FKPLTIKSIT…FQVTLDVELQ (139 aa)) enclose the C2 tensin-type domain. An SH3-binding motif is present at residues 409–417 (PIDIPPDNP). Positions 451-776 (QESEQSDDEL…GKGSSNLEGK (326 aa)) are disordered. 2 positions are modified to phosphoserine: Ser453 and Ser456. A compositionally biased stretch (polar residues) spans 506–523 (AMSNSFSPPAAPPTNSEL). The span at 554-572 (ASTQSTPRRSATSTSASPT) shows a compositional bias: low complexity. Ser563 and Ser570 each carry phosphoserine. Residues 599–629 (FLNTSSASSDPFLQPTRSPSPTVHASSTPAV) show a composition bias toward polar residues. Low complexity predominate over residues 654 to 669 (SAATSPTGSSHGTPTH). One can recognise a J domain in the interval 849–913 (TKWKPVGMAD…FENQGQKPLY (65 aa)).

Forms a complex composed of HSPA8, CLTC and DNAJC6. Interacts with HSPA8/HSC70 in an ATP-dependent manner; this interaction stimulates the HSPA8's ATPase activity. Interacts with CLTC; this interaction produces a local change in heavy-chain contacts, creating a detectable global distortion of the clathrin coat. Interacts with AP2A2. Interacts with DNM1(GTP-bound form); this interaction allows clathrin-coated vesicle (CCV) formation at the plasma membrane. Post-translationally, phosphorylation at Ser-570 modulates its ability to bind CLTC and therefore the synaptic vesicle endocytosis (SVE). In terms of processing, the N-terminus is blocked. Expressed in various brain regions, including cerebellum, corpus callosum, cortex, striatum, brainstem, pons, putamen, spinal cord and substantia nigra. Very low expression in non-neural tissues such as leukocytes, liver, adipose tissue, skeletal muscle and bone marrow.

The protein localises to the cytoplasmic vesicle. The protein resides in the clathrin-coated vesicle. Functionally, may act as a protein phosphatase and/or a lipid phosphatase. Co-chaperone that recruits HSPA8/HSC70 to clathrin-coated vesicles (CCVs) and promotes the ATP-dependent dissociation of clathrin from CCVs and participates in clathrin-mediated endocytosis of synaptic vesicles and their recycling and also in intracellular trafficking. Firstly, binds tightly to the clathrin cages, at a ratio of one DNAJC6 per clathrin triskelion. The HSPA8:ATP complex then binds to the clathrin-auxilin cage, initially at a ratio of one HSPA8 per triskelion leading to ATP hydrolysis stimulation and causing a conformational change in the HSPA8. This cycle is repeated three times to drive to a complex containing the clathrin-auxilin cage associated to three HSPA8:ADP complex. The ATP hydrolysis of the third HSPA8:ATP complex leads to a concerted dismantling of the cage into component triskelia. Then, dissociates from the released triskelia and be recycled to initiate another cycle of HSPA8's recruitment. Also acts during the early steps of clathrin-coated vesicle (CCV) formation through its interaction with the GTP bound form of DNM1. The sequence is that of Auxilin from Homo sapiens (Human).